A 156-amino-acid polypeptide reads, in one-letter code: Small ribosomal subunit protein uS10m (156 aa).

Belongs to the universal ribosomal protein uS10 family.

It is found in the mitochondrion. In terms of biological role, ribosomal protein required for normal mitochondrial function and normal larval development. Thought to have a role in insulin/IGF signaling. This chain is Small ribosomal subunit protein uS10m (mrps-10), found in Caenorhabditis elegans.